We begin with the raw amino-acid sequence, 160 residues long: Keratin-associated protein 13-4 (160 aa).

4 repeat units span residues 41 to 50 (CQLGSSLYRD), 51 to 60 (CQKTCWEPAS), 61 to 70 (CQKSCYHPRT), and 77 to 86 (CQTTCSGSLG). A 4 X 10 AA approximate repeats region spans residues 41-86 (CQLGSSLYRDCQKTCWEPASCQKSCYHPRTSMLCCPCQTTCSGSLG).

The protein belongs to the PMG family. In terms of assembly, interacts with hair keratins.

In the hair cortex, hair keratin intermediate filaments are embedded in an interfilamentous matrix, consisting of hair keratin-associated proteins (KRTAP), which are essential for the formation of a rigid and resistant hair shaft through their extensive disulfide bond cross-linking with abundant cysteine residues of hair keratins. The matrix proteins include the high-sulfur and high-glycine-tyrosine keratins. In Hylobates agilis (Agile gibbon), this protein is Keratin-associated protein 13-4 (KRTAP13-4).